Here is a 162-residue protein sequence, read N- to C-terminus: MGLETEKADVQLFMDDDSYSHHSGVDYGDPEKFVDSGQDRDPHRLNSQLKVGFEDVIAEPVTTHSFDKVWICSHALFEISKYVLYKFLTVFLAIPLAFVAGILFATLSCLHIWIIMPFVKTCLMVLPSVQTIWKSVTDVIIAPLCTSVGRSFSSISLRLSQD.

The Cytoplasmic portion of the chain corresponds to 1–86; that stretch reads MGLETEKADV…FEISKYVLYK (86 aa). Residue Y19 is modified to Phosphotyrosine; by SRC. Phosphoserine occurs at positions 20 and 23. Y27 carries the post-translational modification Phosphotyrosine; by SRC. S36 carries the post-translational modification Phosphoserine. An intramembrane region (helical) is located at residues 87–107; the sequence is FLTVFLAIPLAFVAGILFATL. The Cytoplasmic segment spans residues 108 to 162; that stretch reads SCLHIWIIMPFVKTCLMVLPSVQTIWKSVTDVIIAPLCTSVGRSFSSISLRLSQD.

It belongs to the caveolin family. As to quaternary structure, monomer or homodimer. Interacts with CAV1; the interaction forms a stable heterooligomeric complex that is required for targeting to lipid rafts and for caveolae formation. Tyrosine phosphorylated forms do not form heterooligomers with the Tyr-19-phosphorylated form existing as a monomer or dimer, and the Tyr-27-form as a monomer only. Interacts (tyrosine phosphorylated form) with the SH2 domain-containing proteins, RASA1, NCK1 and SRC. Interacts (tyrosine phosphorylated form) with INSR, the interaction (Tyr-27-phosphorylated form) is increased on insulin stimulation. Interacts (Tyr-19 phosphorylated form) with MAPK1 (phosphorylated form); the interaction, promoted by insulin, leads to nuclear location and MAPK1 activation. Interacts with STAT3; the interaction is increased on insulin-induced tyrosine phosphorylation leading to STAT activation. In terms of processing, phosphorylated on serine and tyrosine residues. CAV1 promotes phosphorylation on Ser-23 which then targets the complex to the plasma membrane, lipid rafts and caveolae. Phosphorylation on Ser-36 appears to modulate mitosis in endothelial cells. Phosphorylation on both Tyr-19 and Tyr-27 is required for insulin-induced 'Ser-727' phosphorylation of STAT3 and its activation. Phosphorylation on Tyr-19 is required for insulin-induced phosphorylation of MAPK1 and DNA binding of STAT3. Tyrosine phosphorylation is induced by both EGF and insulin (By. similarity).

It is found in the nucleus. Its subcellular location is the cytoplasm. The protein localises to the golgi apparatus membrane. The protein resides in the cell membrane. It localises to the membrane. It is found in the caveola. Functionally, may act as a scaffolding protein within caveolar membranes. Interacts directly with G-protein alpha subunits and can functionally regulate their activity. Acts as an accessory protein in conjunction with CAV1 in targeting to lipid rafts and driving caveolae formation. The Ser-36 phosphorylated form has a role in modulating mitosis in endothelial cells. Positive regulator of cellular mitogenesis of the MAPK signaling pathway. Required for the insulin-stimulated nuclear translocation and activation of MAPK1 and STAT3, and the subsequent regulation of cell cycle progression. This Otolemur garnettii (Small-eared galago) protein is Caveolin-2 (CAV2).